A 107-amino-acid polypeptide reads, in one-letter code: Large ribosomal subunit protein uL24 (107 aa).

Belongs to the universal ribosomal protein uL24 family. Part of the 50S ribosomal subunit.

One of two assembly initiator proteins, it binds directly to the 5'-end of the 23S rRNA, where it nucleates assembly of the 50S subunit. Functionally, one of the proteins that surrounds the polypeptide exit tunnel on the outside of the subunit. In Solidesulfovibrio magneticus (strain ATCC 700980 / DSM 13731 / RS-1) (Desulfovibrio magneticus), this protein is Large ribosomal subunit protein uL24.